Reading from the N-terminus, the 178-residue chain is Large ribosomal subunit protein uL6 (178 aa).

Belongs to the universal ribosomal protein uL6 family. In terms of assembly, part of the 50S ribosomal subunit.

Functionally, this protein binds to the 23S rRNA, and is important in its secondary structure. It is located near the subunit interface in the base of the L7/L12 stalk, and near the tRNA binding site of the peptidyltransferase center. This chain is Large ribosomal subunit protein uL6, found in Campylobacter hominis (strain ATCC BAA-381 / DSM 21671 / CCUG 45161 / LMG 19568 / NCTC 13146 / CH001A).